Reading from the N-terminus, the 472-residue chain is Serine/threonine-protein kinase ULK3 (472 aa).

One can recognise a Protein kinase domain in the interval 14 to 270 (FILTERLGSG…FKDFFAHPWV (257 aa)). ATP-binding positions include 20 to 28 (LGSGTYATV) and Lys-44. Asp-137 acts as the Proton acceptor in catalysis. Residue Ser-176 is modified to Phosphoserine. An MIT 1 domain is found at 280–348 (SLAQARALVV…SRAEELKAIV (69 aa)). 3 positions are modified to phosphoserine; by autocatalysis: Ser-350, Ser-384, and Ser-464. An MIT 2 domain is found at 375-444 (RLLAALEVAS…ARAEYLKEQI (70 aa)).

Belongs to the protein kinase superfamily. Ser/Thr protein kinase family. APG1/unc-51/ULK1 subfamily. Interacts (via protein kinase domain) with SUFU. In terms of processing, autophosphorylated. Autophosphorylation is blocked by interaction with SUFU.

It localises to the cytoplasm. The enzyme catalyses L-seryl-[protein] + ATP = O-phospho-L-seryl-[protein] + ADP + H(+). The catalysed reaction is L-threonyl-[protein] + ATP = O-phospho-L-threonyl-[protein] + ADP + H(+). In terms of biological role, serine/threonine protein kinase that acts as a regulator of Sonic hedgehog (SHH) signaling and autophagy. Acts as a negative regulator of SHH signaling in the absence of SHH ligand: interacts with SUFU, thereby inactivating the protein kinase activity and preventing phosphorylation of GLI proteins (GLI1, GLI2 and/or GLI3). Positively regulates SHH signaling in the presence of SHH: dissociates from SUFU, autophosphorylates and mediates phosphorylation of GLI2, activating it and promoting its nuclear translocation. Phosphorylates in vitro GLI2, as well as GLI1 and GLI3, although less efficiently. Also acts as a regulator of autophagy: following cellular senescence, able to induce autophagy. The protein is Serine/threonine-protein kinase ULK3 (Ulk3) of Mus musculus (Mouse).